Consider the following 702-residue polypeptide: ATP-dependent zinc metalloprotease FtsH (702 aa).

Topologically, residues 1–26 (MKKRNKGLVEQTTTEKNNFSRKTAWK) are cytoplasmic. A helical membrane pass occupies residues 27–47 (VFWWVIILAVVIGVLAYIFSP). The Extracellular segment spans residues 48–175 (RAATAVVESW…FIAPDTRARD (128 aa)). A helical transmembrane segment spans residues 176–196 (VLNGLFGLLPIIIFVVFFLLF). The Cytoplasmic portion of the chain corresponds to 197 to 702 (WRSARGISAG…EVKPESETNS (506 aa)). 271–278 (GPPGTGKT) is a binding site for ATP. Histidine 493 contributes to the Zn(2+) binding site. The active site involves glutamate 494. Zn(2+) is bound by residues histidine 497 and aspartate 572. Positions 682 to 702 (EQQAKQKLNKSEVKPESETNS) are disordered. Residues 690 to 702 (NKSEVKPESETNS) show a composition bias toward basic and acidic residues.

In the central section; belongs to the AAA ATPase family. The protein in the C-terminal section; belongs to the peptidase M41 family. As to quaternary structure, homohexamer. Requires Zn(2+) as cofactor.

The protein resides in the cell membrane. Acts as a processive, ATP-dependent zinc metallopeptidase for both cytoplasmic and membrane proteins. Plays a role in the quality control of integral membrane proteins. This Mycoplasma genitalium (strain ATCC 33530 / DSM 19775 / NCTC 10195 / G37) (Mycoplasmoides genitalium) protein is ATP-dependent zinc metalloprotease FtsH.